Reading from the N-terminus, the 741-residue chain is Fibrinogen alpha chain (741 aa).

Residues 1–18 (MIPVTILCVLLCLNLAWA) form the signal peptide. Gln-19 bears the Pyrrolidone carboxylic acid mark. A coiled-coil region spans residues 67–506 (CCRMQGIIDD…STRRSYNGKD (440 aa)). The interval 270-307 (VAEARGDSSPSHTGKLITSSHRRESPSLVDKTSSASSV) is disordered. Residues 277 to 288 (SSPSHTGKLITS) show a composition bias toward polar residues. A disulfide bond links Cys-310 and Cys-341. 2 stretches are compositionally biased toward low complexity: residues 381 to 398 (STSS…HVTG) and 435 to 449 (SASH…SSSS). The disordered stretch occupies residues 381–510 (STSSRHSIGS…SYNGKDCDDI (130 aa)). The segment covering 450-459 (FNKGGSTFET) has biased composition (polar residues). A Fibrinogen C-terminal domain is found at 498–739 (TRRSYNGKDC…VVRMKIRPLE (242 aa)). Asp-666, Asp-668, Trp-670, and Glu-672 together coordinate Ca(2+). A disulfide bridge connects residues Cys-674 and Cys-687.

Heterohexamer; disulfide linked. Contains 2 sets of 3 non-identical chains (alpha, beta and gamma). The 2 heterotrimers are in head to head conformation with the N-termini in a small central domain. In terms of processing, conversion of fibrinogen to fibrin is triggered by thrombin, which cleaves fibrinopeptides A and B from alpha and beta chains, and thus exposes the N-terminal polymerization sites responsible for the formation of the soft clot. The soft clot is converted into the hard clot by factor XIIIA which catalyzes the epsilon-(gamma-glutamyl)lysine cross-linking between gamma chains (stronger) and between alpha chains (weaker) of different monomers. Post-translationally, forms F13A-mediated cross-links between a glutamine and the epsilon-amino group of a lysine residue, forming fibronectin-fibrinogen heteropolymers.

The protein resides in the secreted. Its function is as follows. Cleaved by the protease thrombin to yield monomers which, together with fibrinogen beta (FGB) and fibrinogen gamma (FGG), polymerize to form an insoluble fibrin matrix. Fibrin has a major function in hemostasis as one of the primary components of blood clots. In Gallus gallus (Chicken), this protein is Fibrinogen alpha chain (FGA).